We begin with the raw amino-acid sequence, 114 residues long: NTGGKAPRKHIAHKQAKKSSAAAATGGVKKPHRFRPGTVALREIRRFQKSTELLIRKLPFQRLVREIAQEYKSDLRFQSQAVLALQEAAEAYMVGLFEDTNLCAIHAKRVTIMP.

Basic residues predominate over residues 1–17 (NTGGKAPRKHIAHKQAK). The segment at 1–32 (NTGGKAPRKHIAHKQAKKSSAAAATGGVKKPH) is disordered. The span at 18–28 (KSSAAAATGGV) shows a compositional bias: low complexity.

This sequence belongs to the histone H3 family. As to quaternary structure, the nucleosome is a histone octamer containing two molecules each of H2A, H2B, H3 and H4 assembled in one H3-H4 heterotetramer and two H2A-H2B heterodimers. The octamer wraps approximately 147 bp of DNA.

The protein localises to the nucleus. It localises to the chromosome. Functionally, core component of nucleosome. Nucleosomes wrap and compact DNA into chromatin, limiting DNA accessibility to the cellular machineries which require DNA as a template. Histones thereby play a central role in transcription regulation, DNA repair, DNA replication and chromosomal stability. DNA accessibility is regulated via a complex set of post-translational modifications of histones, also called histone code, and nucleosome remodeling. The protein is Histone H3-6 (H3-6) of Stylonychia lemnae (Ciliate).